Here is a 201-residue protein sequence, read N- to C-terminus: Pyridoxine/pyridoxamine 5'-phosphate oxidase (201 aa).

FMN-binding positions include 49 to 54 (RMVLLK), 64 to 65 (YT), Lys-71, and Gln-93. A substrate-binding site is contributed by Lys-54. Substrate is bound by residues Tyr-111, Arg-115, and Ser-119. Residues 128–129 (QS) and Trp-172 each bind FMN. 178 to 180 (RLH) is a substrate binding site. Residue Arg-182 coordinates FMN.

It belongs to the pyridoxamine 5'-phosphate oxidase family. As to quaternary structure, homodimer. FMN serves as cofactor.

It carries out the reaction pyridoxamine 5'-phosphate + O2 + H2O = pyridoxal 5'-phosphate + H2O2 + NH4(+). The enzyme catalyses pyridoxine 5'-phosphate + O2 = pyridoxal 5'-phosphate + H2O2. Its pathway is cofactor metabolism; pyridoxal 5'-phosphate salvage; pyridoxal 5'-phosphate from pyridoxamine 5'-phosphate: step 1/1. The protein operates within cofactor metabolism; pyridoxal 5'-phosphate salvage; pyridoxal 5'-phosphate from pyridoxine 5'-phosphate: step 1/1. Catalyzes the oxidation of either pyridoxine 5'-phosphate (PNP) or pyridoxamine 5'-phosphate (PMP) into pyridoxal 5'-phosphate (PLP). The chain is Pyridoxine/pyridoxamine 5'-phosphate oxidase from Ruegeria sp. (strain TM1040) (Silicibacter sp.).